Reading from the N-terminus, the 417-residue chain is Serine hydroxymethyltransferase 2 (417 aa).

Residues Leu-121 and 125–127 (GHL) each bind (6S)-5,6,7,8-tetrahydrofolate. The residue at position 230 (Lys-230) is an N6-(pyridoxal phosphate)lysine. A (6S)-5,6,7,8-tetrahydrofolate-binding site is contributed by 355–357 (SPF).

The protein belongs to the SHMT family. Homodimer. Pyridoxal 5'-phosphate is required as a cofactor.

The protein resides in the cytoplasm. It carries out the reaction (6R)-5,10-methylene-5,6,7,8-tetrahydrofolate + glycine + H2O = (6S)-5,6,7,8-tetrahydrofolate + L-serine. It functions in the pathway one-carbon metabolism; tetrahydrofolate interconversion. Its pathway is amino-acid biosynthesis; glycine biosynthesis; glycine from L-serine: step 1/1. Its function is as follows. Catalyzes the reversible interconversion of serine and glycine with tetrahydrofolate (THF) serving as the one-carbon carrier. This reaction serves as the major source of one-carbon groups required for the biosynthesis of purines, thymidylate, methionine, and other important biomolecules. Also exhibits THF-independent aldolase activity toward beta-hydroxyamino acids, producing glycine and aldehydes, via a retro-aldol mechanism. The chain is Serine hydroxymethyltransferase 2 from Pseudomonas syringae pv. syringae (strain B728a).